Consider the following 427-residue polypeptide: 3-phosphoshikimate 1-carboxyvinyltransferase (427 aa).

3-phosphoshikimate contacts are provided by lysine 22, serine 23, and arginine 27. Lysine 22 is a binding site for phosphoenolpyruvate. Phosphoenolpyruvate contacts are provided by glycine 96 and arginine 124. 3-phosphoshikimate-binding residues include serine 169, serine 170, glutamine 171, serine 197, aspartate 313, asparagine 336, and lysine 340. Glutamine 171 provides a ligand contact to phosphoenolpyruvate. Aspartate 313 (proton acceptor) is an active-site residue. Phosphoenolpyruvate contacts are provided by arginine 344, arginine 386, and lysine 411.

The protein belongs to the EPSP synthase family. Monomer.

Its subcellular location is the cytoplasm. The catalysed reaction is 3-phosphoshikimate + phosphoenolpyruvate = 5-O-(1-carboxyvinyl)-3-phosphoshikimate + phosphate. It functions in the pathway metabolic intermediate biosynthesis; chorismate biosynthesis; chorismate from D-erythrose 4-phosphate and phosphoenolpyruvate: step 6/7. Its function is as follows. Catalyzes the transfer of the enolpyruvyl moiety of phosphoenolpyruvate (PEP) to the 5-hydroxyl of shikimate-3-phosphate (S3P) to produce enolpyruvyl shikimate-3-phosphate and inorganic phosphate. This Shigella flexneri serotype 5b (strain 8401) protein is 3-phosphoshikimate 1-carboxyvinyltransferase.